Consider the following 985-residue polypeptide: Invasin (985 aa).

Residues 494 to 594 form a D1 region; it reads SVTVQQPQLT…RQSVDTHFVK (101 aa). Residues 494-985 are Extracellular-facing; sequence SVTVQQPQLT…LAFPLCALAI (492 aa). Big-1 domains are found at residues 503 to 594 and 601 to 691; these read TLTA…HFVK and KSTL…VNFT. The tract at residues 595–694 is D2; that stretch reads GTIAADKSTL…SVTVNFTADP (100 aa). The segment at 695–794 is D3; sequence IPDAGRSSFT…LQKKISLFPV (100 aa). The interval 795 to 886 is D4; sequence PTLTGILVNG…YSVSYRFYPN (92 aa). The integrin-binding stretch occupies residues 795–985; it reads PTLTGILVNG…LAFPLCALAI (191 aa). The segment at 887–985 is D5; that stretch reads RWIYDGGTSL…LAFPLCALAI (99 aa). A disulfide bridge connects residues C906 and C981.

Belongs to the intimin/invasin family.

The protein resides in the cell surface. In terms of biological role, invasin is a protein that allows enteric bacteria to penetrate cultured mammalian cells. The entry of invasin in the cell is mediated by binding several beta-1 chain integrins. The polypeptide is Invasin (Yersinia pseudotuberculosis serotype I (strain IP32953)).